We begin with the raw amino-acid sequence, 282 residues long: Release factor glutamine methyltransferase (282 aa).

Residues 120-124 (GVGSG), D143, and N189 each bind S-adenosyl-L-methionine. 189–192 (NPPY) contacts substrate.

This sequence belongs to the protein N5-glutamine methyltransferase family. PrmC subfamily.

The enzyme catalyses L-glutaminyl-[peptide chain release factor] + S-adenosyl-L-methionine = N(5)-methyl-L-glutaminyl-[peptide chain release factor] + S-adenosyl-L-homocysteine + H(+). Its function is as follows. Methylates the class 1 translation termination release factors RF1/PrfA and RF2/PrfB on the glutamine residue of the universally conserved GGQ motif. This chain is Release factor glutamine methyltransferase, found in Dictyoglomus turgidum (strain DSM 6724 / Z-1310).